The following is a 311-amino-acid chain: Ornithine carbamoyltransferase (311 aa).

Residues 59–62 (STRT), Gln-86, Arg-110, and 137–140 (HPCQ) each bind carbamoyl phosphate. L-ornithine is bound by residues Asn-168, Asp-228, and 232-233 (SM). Residues 267–268 (CL) and Arg-295 each bind carbamoyl phosphate.

It belongs to the aspartate/ornithine carbamoyltransferase superfamily. OTCase family.

The protein localises to the cytoplasm. It catalyses the reaction carbamoyl phosphate + L-ornithine = L-citrulline + phosphate + H(+). It participates in amino-acid biosynthesis; L-arginine biosynthesis; L-arginine from L-ornithine and carbamoyl phosphate: step 1/3. Reversibly catalyzes the transfer of the carbamoyl group from carbamoyl phosphate (CP) to the N(epsilon) atom of ornithine (ORN) to produce L-citrulline. This is Ornithine carbamoyltransferase from Caulobacter vibrioides (strain ATCC 19089 / CIP 103742 / CB 15) (Caulobacter crescentus).